Here is a 292-residue protein sequence, read N- to C-terminus: uncharacterized protein (292 aa).

An N-terminal signal peptide occupies residues 1-21; the sequence is MNSNSNKKRDPARFPAGVAQG. Residues 1–30 are disordered; it reads MNSNSNKKRDPARFPAGVAQGCSTTRAGDL.

This is an uncharacterized protein from Treponema pallidum (strain Nichols).